The following is a 295-amino-acid chain: Putative F-box protein At5g44220 (295 aa).

An F-box domain is found at 56 to 102 (STNSDLLPMDLIKEILKRLPAKTLARFLCVSKLWSSIIRSRDLMKLF).

This chain is Putative F-box protein At5g44220, found in Arabidopsis thaliana (Mouse-ear cress).